Reading from the N-terminus, the 137-residue chain is Small ribosomal subunit protein uS12 (137 aa).

D102 is subject to 3-methylthioaspartic acid.

The protein belongs to the universal ribosomal protein uS12 family. As to quaternary structure, part of the 30S ribosomal subunit. Contacts proteins S8 and S17. May interact with IF1 in the 30S initiation complex.

Its function is as follows. With S4 and S5 plays an important role in translational accuracy. Functionally, interacts with and stabilizes bases of the 16S rRNA that are involved in tRNA selection in the A site and with the mRNA backbone. Located at the interface of the 30S and 50S subunits, it traverses the body of the 30S subunit contacting proteins on the other side and probably holding the rRNA structure together. The combined cluster of proteins S8, S12 and S17 appears to hold together the shoulder and platform of the 30S subunit. The sequence is that of Small ribosomal subunit protein uS12 from Mesoplasma florum (strain ATCC 33453 / NBRC 100688 / NCTC 11704 / L1) (Acholeplasma florum).